A 173-amino-acid polypeptide reads, in one-letter code: dCTP deaminase, dUMP-forming (173 aa).

DCTP contacts are provided by residues 93 to 98, Asp111, 119 to 121, Gln138, and Tyr151; these read RSSTGR and TLE. Glu121 acts as the Proton donor/acceptor in catalysis.

This sequence belongs to the dCTP deaminase family. Homotrimer.

The enzyme catalyses dCTP + 2 H2O = dUMP + NH4(+) + diphosphate. Its pathway is pyrimidine metabolism; dUMP biosynthesis; dUMP from dCTP: step 1/1. In terms of biological role, bifunctional enzyme that catalyzes both the deamination of dCTP to dUTP and the hydrolysis of dUTP to dUMP without releasing the toxic dUTP intermediate. This is dCTP deaminase, dUMP-forming from Clostridium botulinum (strain Eklund 17B / Type B).